Consider the following 78-residue polypeptide: Translational regulator CsrA (78 aa).

Belongs to the CsrA/RsmA family. As to quaternary structure, homodimer; the beta-strands of each monomer intercalate to form a hydrophobic core, while the alpha-helices form wings that extend away from the core.

The protein localises to the cytoplasm. In terms of biological role, a translational regulator that binds mRNA to regulate translation initiation and/or mRNA stability. Usually binds in the 5'-UTR at or near the Shine-Dalgarno sequence preventing ribosome-binding, thus repressing translation. Its main target seems to be the major flagellin gene, while its function is anatagonized by FliW. In Natranaerobius thermophilus (strain ATCC BAA-1301 / DSM 18059 / JW/NM-WN-LF), this protein is Translational regulator CsrA.